The primary structure comprises 397 residues: Succinyl-diaminopimelate desuccinylase (397 aa).

Zn(2+) is bound at residue His-73. Asp-75 is an active-site residue. Residue Asp-106 participates in Zn(2+) binding. Glu-140 (proton acceptor) is an active-site residue. Positions 141, 169, and 366 each coordinate Zn(2+).

This sequence belongs to the peptidase M20A family. DapE subfamily. In terms of assembly, homodimer. Zn(2+) serves as cofactor. Co(2+) is required as a cofactor.

It carries out the reaction N-succinyl-(2S,6S)-2,6-diaminopimelate + H2O = (2S,6S)-2,6-diaminopimelate + succinate. It participates in amino-acid biosynthesis; L-lysine biosynthesis via DAP pathway; LL-2,6-diaminopimelate from (S)-tetrahydrodipicolinate (succinylase route): step 3/3. Its function is as follows. Catalyzes the hydrolysis of N-succinyl-L,L-diaminopimelic acid (SDAP), forming succinate and LL-2,6-diaminopimelate (DAP), an intermediate involved in the bacterial biosynthesis of lysine and meso-diaminopimelic acid, an essential component of bacterial cell walls. This is Succinyl-diaminopimelate desuccinylase from Sinorhizobium medicae (strain WSM419) (Ensifer medicae).